The chain runs to 424 residues: MASGDGGDDAGVKRVADRYLKREVLGEGTYGVVFKAVDTKTGNTVAIKKIRLGKYKEGVNFTALREIKLLKELKDSNIIELIDAFPYKGNLHLVFEFMETDLEAVIRDRNIVLSPADTKSYIQMMLKGLAFCHKKWVLHRDMKPNNLLIGADGQLKLADFGLARIFGSPERNFTHQVFARWYRAPELLFGTKQYGSAVDIWAAGCIFAELLLRRPFLQGSSDIDQLGKIFAAFGTPKSSQWPDMVYLPDYVEYQFVSAPPLRSLFPMASDDALDLLSRMFTYDPKARITAQQALEHRYFLSVPAPTKPSQLPRPPPKGDSGNNKIPDLNLQDGPVVLSPPRKLRRVTAHEGMEVHMHRADRTEEHPSGARHMDDMSSQSSRIPMSVDVGAIFGTRPAPRPTLNSADKSRLKRKLDMDPEFGYTE.

The Protein kinase domain maps to 19–299 (YLKREVLGEG…AQQALEHRYF (281 aa)). ATP is bound by residues 25–33 (LGEGTYGVV) and K48. Position 29 is a phosphothreonine (T29). Y30 bears the Phosphotyrosine mark. The Proton acceptor role is filled by D141. Residue S168 is modified to Phosphoserine. The residue at position 174 (T174) is a Phosphothreonine. Disordered regions lie at residues 303 to 337 (PAPTKPSQLPRPPPKGDSGNNKIPDLNLQDGPVVL) and 359 to 424 (ADRT…GYTE). Residues 359 to 374 (ADRTEEHPSGARHMDD) show a composition bias toward basic and acidic residues.

The protein belongs to the protein kinase superfamily. CMGC Ser/Thr protein kinase family. CDC2/CDKX subfamily. In terms of assembly, interacts with CYCH1-1. In terms of tissue distribution, expressed in actively dividing cells of roots, leaves and shoots. Expressed in the intercalary meristem and the elongation zone of internodes.

It localises to the nucleus. It carries out the reaction L-seryl-[protein] + ATP = O-phospho-L-seryl-[protein] + ADP + H(+). The enzyme catalyses L-threonyl-[protein] + ATP = O-phospho-L-threonyl-[protein] + ADP + H(+). It catalyses the reaction [DNA-directed RNA polymerase] + ATP = phospho-[DNA-directed RNA polymerase] + ADP + H(+). CDK-activating kinase that may control G1/S phase progression. May control the rate of cell differentiation to accomplish proper development of organs, or in response to a changing environment. Forms a complex with cyclin CYCH1-1 that phosphorylates CDKA-1 and the C-terminal domain (CTD) of the large subunit of RNA polymerase II. This chain is Cyclin-dependent kinase D-1 (CDKD-1), found in Oryza sativa subsp. japonica (Rice).